A 337-amino-acid chain; its full sequence is Angiopoietin-related protein 7 (337 aa).

The N-terminal stretch at 1-21 is a signal peptide; sequence MLRETWLCVILVAFVSHPVWL. Residues 30 to 110 adopt a coiled-coil conformation; the sequence is QLKAAGCCEE…DIMQLQAAQT (81 aa). Asn49 is a glycosylation site (N-linked (GlcNAc...) asparagine). The Fibrinogen C-terminal domain occupies 113-334; it reads QTSADAIYDC…RVEMKIRPEA (222 aa). The cysteines at positions 122 and 153 are disulfide-linked. Asn244 and Asn258 each carry an N-linked (GlcNAc...) asparagine glycan. A disulfide bridge links Cys276 with Cys289. N-linked (GlcNAc...) asparagine glycosylation is present at Asn320.

Homotetramer; disulfide-linked.

It is found in the secreted. In terms of biological role, has a role in the formation and organization of the extracellular matrix. In the eye, it functions as a mediator of dexamethasone-induced matrix deposition in the trabecular meshwork, the tissue responsible for the outflow of the ocular aqueous humor and for the maintenance of intraocular pressure. Is a negative regulator of angiogenesis in the cornea, and plays a major role in maintaining corneal avascularity and transparency. This chain is Angiopoietin-related protein 7 (Angptl7), found in Mus musculus (Mouse).